A 194-amino-acid polypeptide reads, in one-letter code: Threonylcarbamoyl-AMP synthase (194 aa).

In terms of domain architecture, YrdC-like spans 11–194 (FRNLMKIINA…GINYKIIRKG (184 aa)).

Belongs to the SUA5 family. TsaC subfamily.

It localises to the cytoplasm. The catalysed reaction is L-threonine + hydrogencarbonate + ATP = L-threonylcarbamoyladenylate + diphosphate + H2O. In terms of biological role, required for the formation of a threonylcarbamoyl group on adenosine at position 37 (t(6)A37) in tRNAs that read codons beginning with adenine. Catalyzes the conversion of L-threonine, HCO(3)(-)/CO(2) and ATP to give threonylcarbamoyl-AMP (TC-AMP) as the acyladenylate intermediate, with the release of diphosphate. The chain is Threonylcarbamoyl-AMP synthase from Wigglesworthia glossinidia brevipalpis.